The sequence spans 76 residues: Toxin Acra III-1 (76 aa).

The LCN-type CS-alpha/beta domain maps to 4 to 67 (PGNYPLDTRG…IWDAVKNHCT (64 aa)). 3 disulfide bridges follow: cysteine 18–cysteine 41, cysteine 27–cysteine 46, and cysteine 31–cysteine 48.

The protein belongs to the long (3 C-C) scorpion toxin superfamily. Sodium channel inhibitor family. Beta subfamily. In terms of tissue distribution, expressed by the venom gland.

It localises to the secreted. Its function is as follows. Binds to sodium channels (Nav) and affects the channel activation process. The sequence is that of Toxin Acra III-1 from Androctonus crassicauda (Arabian fat-tailed scorpion).